The following is a 372-amino-acid chain: Glutamate 5-kinase (372 aa).

K14 contacts ATP. S54, D141, and N153 together coordinate substrate. Residue 173 to 174 coordinates ATP; that stretch reads TD. Residues 280–358 enclose the PUA domain; sequence RGNVTLDEGA…DEIESLLGYI (79 aa).

This sequence belongs to the glutamate 5-kinase family.

It localises to the cytoplasm. It carries out the reaction L-glutamate + ATP = L-glutamyl 5-phosphate + ADP. The protein operates within amino-acid biosynthesis; L-proline biosynthesis; L-glutamate 5-semialdehyde from L-glutamate: step 1/2. Catalyzes the transfer of a phosphate group to glutamate to form L-glutamate 5-phosphate. The polypeptide is Glutamate 5-kinase (Nitrosospira multiformis (strain ATCC 25196 / NCIMB 11849 / C 71)).